Reading from the N-terminus, the 1529-residue chain is Myosin-11 (1529 aa).

The Myosin N-terminal SH3-like domain maps to 11-60; that stretch reads IVGSHVWIEDSDVAWIDGLVEKINGQDVEVQATNGKKITAKLSKIYPKDM. The Myosin motor domain maps to 65-735; the sequence is GGVDDMTKLS…QMAELDARRT (671 aa). Residues 159–166 and 212–220 contribute to the ATP site; these read GESGAGKT and NNNSSRFGK. Actin-binding stretches follow at residues 498–532, 534–557, 592–616, and 616–638; these read LIEK…YQTF, THKR…AGEV, FPPL…KLQL, and LQQL…KPNN. IQ domains follow at residues 738-767, 761-790, 786-815, 809-838, 834-863, and 857-886; these read LSAA…ATIS, LRKA…QAAA, RQAA…AALV, LHVA…TKAA, QTKA…GVIL, and LKKG…ASRE. Residues 887–1059 are a coiled coil; it reads TGALKEAKDM…VLRQQAVSIA (173 aa). Positions 993 to 1027 are enriched in basic and acidic residues; that stretch reads EQEKQRADDATRKFDEAQESSEDRKKKLEDTEKKA. 2 disordered regions span residues 993–1031 and 1096–1115; these read EQEK…QQLQ and INRR…LNEK. Positions 1163–1472 constitute a Dilute domain; that stretch reads DRIIQTIGQA…IANMRVLMTE (310 aa).

It belongs to the TRAFAC class myosin-kinesin ATPase superfamily. Myosin family. Plant myosin class XI subfamily. Homodimer.

It localises to the cytoplasm. Myosin heavy chain that is required for the cell cycle-regulated transport of various organelles and proteins for their segregation. Functions by binding with its tail domain to receptor proteins on organelles and exerting force with its N-terminal motor domain against actin filaments, thereby transporting its cargo along polarized actin cables. Involved in trafficking of Golgi stacks, mitochondria and peroxisomes. In Arabidopsis thaliana (Mouse-ear cress), this protein is Myosin-11 (XI-E).